Here is a 138-residue protein sequence, read N- to C-terminus: Protein X (138 aa).

Residues Pro20–Ser43 are disordered. The span at Pro25–Ser43 shows a compositional bias: low complexity. Positions Pro68 to Leu113 are mitochondrial targeting sequence.

The protein belongs to the orthohepadnavirus protein X family. As to quaternary structure, may form homodimer. May interact with host CEBPA, CFLAR, CREB1, DDB1, E4F1, HBXIP, HSPD1/HSP60, NFKBIA, POLR2E and SMAD4. Interacts with host SMC5-SMC6 complex and induces its degradation. Interacts with host TRPC4AP; leading to prevent ubiquitination of TRPC4AP. Interacts with host PLSCR1; this interaction promotes ubiquitination and degradation of HBx and impairs HBx-mediated cell proliferation. A fraction may be phosphorylated in insect cells and HepG2 cells, a human hepatoblastoma cell line. Phosphorylated in vitro by host protein kinase C or mitogen-activated protein kinase. N-acetylated in insect cells.

The protein localises to the host cytoplasm. Its subcellular location is the host nucleus. It is found in the host mitochondrion. Its function is as follows. Multifunctional protein that plays a role in silencing host antiviral defenses and promoting viral transcription. Does not seem to be essential for HBV infection. May be directly involved in development of cirrhosis and liver cancer (hepatocellular carcinoma). Most of cytosolic activities involve modulation of cytosolic calcium. The effect on apoptosis is controversial depending on the cell types in which the studies have been conducted. May induce apoptosis by localizing in mitochondria and causing loss of mitochondrial membrane potential. May also modulate apoptosis by binding host CFLAR, a key regulator of the death-inducing signaling complex (DISC). Promotes viral transcription by using the host E3 ubiquitin ligase DDB1 to target the SMC5-SMC6 complex to proteasomal degradation. This host complex would otherwise bind to viral episomal DNA, and prevents its transcription. Moderately stimulates transcription of many different viral and cellular transcription elements. Promoters and enhancers stimulated by HBx contain DNA binding sites for NF-kappa-B, AP-1, AP-2, c-EBP, ATF/CREB, or the calcium-activated factor NF-AT. This Ground squirrel hepatitis virus (strain 27) (GSHV) protein is Protein X.